Here is a 641-residue protein sequence, read N- to C-terminus: Threonine--tRNA ligase (641 aa).

A TGS domain is found at 1–61 (MPAITLPDGS…ADDASVRFIT (61 aa)). Residues 243 to 536 (DHRRIGREMD…LIEQHAGRFP (294 aa)) are catalytic. Zn(2+) contacts are provided by cysteine 336, histidine 387, and histidine 513.

It belongs to the class-II aminoacyl-tRNA synthetase family. As to quaternary structure, homodimer. Requires Zn(2+) as cofactor.

The protein localises to the cytoplasm. The enzyme catalyses tRNA(Thr) + L-threonine + ATP = L-threonyl-tRNA(Thr) + AMP + diphosphate + H(+). In terms of biological role, catalyzes the attachment of threonine to tRNA(Thr) in a two-step reaction: L-threonine is first activated by ATP to form Thr-AMP and then transferred to the acceptor end of tRNA(Thr). Also edits incorrectly charged L-seryl-tRNA(Thr). The sequence is that of Threonine--tRNA ligase from Gluconacetobacter diazotrophicus (strain ATCC 49037 / DSM 5601 / CCUG 37298 / CIP 103539 / LMG 7603 / PAl5).